The sequence spans 439 residues: MQSYFDQLEQVHYEGPTSNNPLAFHHYNPDELVLGKRMAEHLRFAACYWHTFCWNGADMFGVGSFDRPWQQPGDALTLAKRKADVAFEFFHKLNVPYYCFHDVDVSPEGASLKEYLHNFAVMTDVLEEKQHSSGVKLLWGTANCFTHPRYGAGAATNPDPEVFSWAATQVFTAMNATQRLGGENYVLWGGREGYETLLNTDLRQEREQIGRFMQMVVEHKHKTGFQGTLLIEPKPQEPTKHQYDYDVATVYGFLKQFGLEKEIKVNIEANHATLAGHSFHHEIATAIALGIFGSVDANRGDPQLGWDTDQFPISVEENALVMFEILKAGGFTTGGLNFDAKVRRQSTDKYDLFYGHIGAMDTMALALKVAAKMVTDGQLHQQVSKRYAGWNGELGQQILQGKLSLEALAQYAEGHALAPQHVSGRQEQLENLMNRYLFG.

Active-site residues include His-101 and Asp-104. Residues Glu-232, Glu-268, His-271, Asp-296, Asp-307, Asp-309, and Asp-339 each contribute to the Mg(2+) site.

Belongs to the xylose isomerase family. Homotetramer. Mg(2+) is required as a cofactor.

It is found in the cytoplasm. The catalysed reaction is alpha-D-xylose = alpha-D-xylulofuranose. The sequence is that of Xylose isomerase from Serratia proteamaculans (strain 568).